The primary structure comprises 142 residues: Nucleoside diphosphate kinase (142 aa).

ATP-binding residues include Lys-11, Phe-59, Arg-87, Thr-93, Arg-104, and Asn-114. The active-site Pros-phosphohistidine intermediate is His-117.

The protein belongs to the NDK family. Homotetramer. Mg(2+) serves as cofactor.

The protein localises to the cytoplasm. It catalyses the reaction dZDP + ATP = dZTP + ADP. The catalysed reaction is a 2'-deoxyribonucleoside 5'-diphosphate + ATP = a 2'-deoxyribonucleoside 5'-triphosphate + ADP. The enzyme catalyses a ribonucleoside 5'-diphosphate + ATP = a ribonucleoside 5'-triphosphate + ADP. The protein operates within purine metabolism. Its function is as follows. Major role in the synthesis of nucleoside triphosphates other than ATP. The ATP gamma phosphate is transferred to the NDP beta phosphate via a ping-pong mechanism, using a phosphorylated active-site intermediate. Functionally, (Microbial infection) Catalyzes the phosphorylation of dZDP to dZTP, when the bacterium is infected by a phage that produces the substrate for the synthesis of dZTP (2- amino-2'-deoxyadenosine 5'-triphosphate), which is then used by the phage as a DNA polymerase substrate. The polypeptide is Nucleoside diphosphate kinase (Vibrio cholerae serotype O1 (strain ATCC 39315 / El Tor Inaba N16961)).